A 361-amino-acid polypeptide reads, in one-letter code: Phosphoserine aminotransferase (361 aa).

Arg42 is a binding site for L-glutamate. Residues 76 to 77 (AR), Trp102, Thr153, Asp173, and Gln196 each bind pyridoxal 5'-phosphate. Lys197 is subject to N6-(pyridoxal phosphate)lysine. Residue 238–239 (NT) participates in pyridoxal 5'-phosphate binding.

The protein belongs to the class-V pyridoxal-phosphate-dependent aminotransferase family. SerC subfamily. As to quaternary structure, homodimer. The cofactor is pyridoxal 5'-phosphate.

It is found in the cytoplasm. The catalysed reaction is O-phospho-L-serine + 2-oxoglutarate = 3-phosphooxypyruvate + L-glutamate. It catalyses the reaction 4-(phosphooxy)-L-threonine + 2-oxoglutarate = (R)-3-hydroxy-2-oxo-4-phosphooxybutanoate + L-glutamate. The protein operates within amino-acid biosynthesis; L-serine biosynthesis; L-serine from 3-phospho-D-glycerate: step 2/3. It functions in the pathway cofactor biosynthesis; pyridoxine 5'-phosphate biosynthesis; pyridoxine 5'-phosphate from D-erythrose 4-phosphate: step 3/5. Its function is as follows. Catalyzes the reversible conversion of 3-phosphohydroxypyruvate to phosphoserine and of 3-hydroxy-2-oxo-4-phosphonooxybutanoate to phosphohydroxythreonine. The chain is Phosphoserine aminotransferase from Yersinia pestis (strain Pestoides F).